We begin with the raw amino-acid sequence, 853 residues long: DNA mismatch repair protein MutS (853 aa).

613-620 (GPNMGGKS) lines the ATP pocket.

This sequence belongs to the DNA mismatch repair MutS family.

This protein is involved in the repair of mismatches in DNA. It is possible that it carries out the mismatch recognition step. This protein has a weak ATPase activity. The polypeptide is DNA mismatch repair protein MutS (Vibrio atlanticus (strain LGP32) (Vibrio splendidus (strain Mel32))).